The chain runs to 522 residues: FAD-dependent monooxygenase fsr3 (522 aa).

Residues 1 to 27 (MKNTQTNGTHPIIDKKPNGTLNGDHQE) form a disordered region. Arg164 is an FAD binding site. Arg245 is a catalytic residue. The FAD site is built by Asp369 and Ala382.

Belongs to the paxM FAD-dependent monooxygenase family. FAD serves as cofactor.

The protein operates within polyketide biosynthesis. FAD-dependent monooxygenase; part of the gene cluster that mediates the biosynthesis of fusarubins, highly pigmented naphthoquinones responsible for the coloration of the fruiting bodies. The non-reducing polyketide synthase FSR1 is responsible for the condensation of seven acetyl-CoA units to yield a haptaketide. After rings A and B are formed by aldol-type cyclization, the PKS-derived product is released as 6-O-demethylfusarubinaldehyde. Then, two hydroxyl groups at C-5 and C-10 are incorporated by FSR3, and simultaneously hydroxyl groups at C-6 and C-8 are methylated by FSR2. The aldehyde is, on the one hand, reduced by FSR3 to 8-O-methylfusarubin alcohol, which equilibrates mainly with 8-O-methylfusarubin and only small amounts of 8-O-methylnectriafurone. On the other hand, the aldehyde can be oxidized to form 8-O-methylfusarubinic acid, a reaction driven by FSR3 equilibrating with 8-O-methylfusarubinlactone, finally resulting in 8-O-methylanhydrofusarubinlactol after a further reduction step and loss of water. 8-O-Methylfusarubinic acid can also undergo decarboxylation, resulting in 8-O-methyl-13-hydroxynorjavanicin after another hydroxylation step at C-13. Both steps are most likely also accomplished by FSR3. No enzymatic function has been determined so far for either FSR4 and FSR5. Their deletion does not alter the product spectrum, but the possibility that they catalyze specific enzymatic steps during perithecium development cannot be ruled out. FSR4 might possess a regulatory function in the biosynthesis of fusarubins. In Gibberella fujikuroi (strain CBS 195.34 / IMI 58289 / NRRL A-6831) (Bakanae and foot rot disease fungus), this protein is FAD-dependent monooxygenase fsr3.